A 347-amino-acid polypeptide reads, in one-letter code: NADH-quinone oxidoreductase subunit H 1 (347 aa).

9 helical membrane-spanning segments follow: residues Ile-13–Val-33, Pro-50–Phe-70, Ala-82–Val-102, Val-115–Gly-135, Ile-161–Val-181, Phe-198–Leu-218, Cys-263–Leu-283, Val-286–Val-306, and Leu-321–Leu-341.

The protein belongs to the complex I subunit 1 family. NDH-1 is composed of 14 different subunits. Subunits NuoA, H, J, K, L, M, N constitute the membrane sector of the complex.

The protein resides in the cell inner membrane. It carries out the reaction a quinone + NADH + 5 H(+)(in) = a quinol + NAD(+) + 4 H(+)(out). Its function is as follows. NDH-1 shuttles electrons from NADH, via FMN and iron-sulfur (Fe-S) centers, to quinones in the respiratory chain. The immediate electron acceptor for the enzyme in this species is believed to be ubiquinone. Couples the redox reaction to proton translocation (for every two electrons transferred, four hydrogen ions are translocated across the cytoplasmic membrane), and thus conserves the redox energy in a proton gradient. This subunit may bind ubiquinone. The polypeptide is NADH-quinone oxidoreductase subunit H 1 (Rhizobium etli (strain ATCC 51251 / DSM 11541 / JCM 21823 / NBRC 15573 / CFN 42)).